Reading from the N-terminus, the 70-residue chain is Protease inhibitor HPI (70 aa).

Position 2 is an N-acetylalanine (Ala2). An S-glutathionyl cysteine; alternate modification is found at Cys5.

This sequence belongs to the protease inhibitor I13 (potato type I serine protease inhibitor) family. As to quaternary structure, monomer and homodimer; disulfide-linked. Occurs in 3 forms that differ in the modification of Cys-5, HPI-1 forms a homodimer through a disulfide bond, HPI-2a is modified by glutathionylation, and HPI-2b is covalently modified by addition of an unidentified adduct but not by a disulfide linkage.

In terms of biological role, inhibitor of serine proteases, strongly inhibits subtilisin A and weakly inhibits trypsin. Does not inhibit chymotrypsin, papain, pepsin, pronase E, protease type XIII and thermolysin. HPI-1 inhibits subtilisin A with an Ki of 0.21 nM. HPI-2a inhibits subtilisin A with an Ki of 0.08 nM. HPI-2b inhibits subtilisin A with an Ki of 0.1 nM. In Hevea brasiliensis (Para rubber tree), this protein is Protease inhibitor HPI.